The sequence spans 202 residues: Na(+)-translocating NADH-quinone reductase subunit E (202 aa).

A run of 6 helical transmembrane segments spans residues 11–31 (AVFIENLALSFFLGMCTFLAV), 35–55 (VTTSIGLGVAVIVVLGISVPV), 81–101 (FLRFLTFIGVIAALVQILEMA), 114–134 (GIFLPLITVNCAIFGAVSFMV), 144–164 (VVYGIGAGVGWALAITLLAGI), and 180–200 (LGITFITVGLMALGFMSFSGI).

Belongs to the NqrDE/RnfAE family. As to quaternary structure, composed of six subunits; NqrA, NqrB, NqrC, NqrD, NqrE and NqrF.

It is found in the cell inner membrane. The enzyme catalyses a ubiquinone + n Na(+)(in) + NADH + H(+) = a ubiquinol + n Na(+)(out) + NAD(+). NQR complex catalyzes the reduction of ubiquinone-1 to ubiquinol by two successive reactions, coupled with the transport of Na(+) ions from the cytoplasm to the periplasm. NqrA to NqrE are probably involved in the second step, the conversion of ubisemiquinone to ubiquinol. This Pseudoalteromonas translucida (strain TAC 125) protein is Na(+)-translocating NADH-quinone reductase subunit E.